A 191-amino-acid polypeptide reads, in one-letter code: Dirigent protein 3 (191 aa).

The first 21 residues, 1–21 (MSKLILILTAQILLLTATALA), serve as a signal peptide directing secretion. 2 N-linked (GlcNAc...) asparagine glycosylation sites follow: Asn96 and Asn131.

It belongs to the plant dirigent protein family. Homodimer.

The protein localises to the secreted. It is found in the extracellular space. It localises to the apoplast. In terms of biological role, dirigent proteins impart stereoselectivity on the phenoxy radical-coupling reaction, yielding optically active lignans from two molecules of coniferyl alcohol in the biosynthesis of lignans, flavonolignans, and alkaloids and thus plays a central role in plant secondary metabolism. The chain is Dirigent protein 3 (DIR3) from Arabidopsis thaliana (Mouse-ear cress).